The sequence spans 457 residues: Peptidyl-prolyl cis-trans isomerase FKBP5 (457 aa).

Met1 carries the N-acetylmethionine modification. The disordered stretch occupies residues 1-26; sequence MTTDEGAKNSRGNPAATVAEQGEDVT. Lys28 carries the N6-acetyllysine modification. 2 PPIase FKBP-type domains span residues 50 to 138 and 165 to 251; these read GDRV…LDFK and GARV…KSFE. TPR repeat units follow at residues 268 to 301, 317 to 350, and 351 to 384; these read AAIV…LEME, LAAF…DSAN, and EKGL…NPQN. Residues 421–457 form a disordered region; it reads AKEEANKAMSKKTSEGVTNEKLTASHAVEEEKPEGHV. Ser445 carries the phosphoserine modification. The segment covering 447–457 has biased composition (basic and acidic residues); that stretch reads AVEEEKPEGHV.

In terms of assembly, part of a heteromultimeric cytoplasmic complex with HSP90AA1, HSPA1A/HSPA1B and steroid receptors. Upon ligand binding dissociates from the complex and FKBP4 takes its place. Interacts with functionally mature heterooligomeric progesterone receptor complexes along with HSP90 and TEBP. Interacts with NR3C1. Interacts with Akt/AKT1 and PHLPP1; enhancing dephosphorylation and subsequent activation of Akt/AKT1. Interacts with IFI44L; this interaction modulates the kinase activity of IKBKB and IKBKE. Interacts with IKBKB and IKBKE. Acetylation impairs ability to promote interaction between Akt/AKT1 and PHLPP1. Deacetylation by SIRT7 promotes interaction between Akt/AKT1 and PHLPP1, leading to suppress Akt/AKT1 activation. In terms of processing, ubiquitinated, leading to degradation in a proteasome-dependent manner. Deubiquitinated by USP49, leading to stabilization.

The protein localises to the cytoplasm. It localises to the nucleus. The enzyme catalyses [protein]-peptidylproline (omega=180) = [protein]-peptidylproline (omega=0). With respect to regulation, inhibited by both FK506 and rapamycin. In terms of biological role, immunophilin protein with PPIase and co-chaperone activities. Component of unligated steroid receptors heterocomplexes through interaction with heat-shock protein 90 (HSP90). Plays a role in the intracellular trafficking of heterooligomeric forms of steroid hormone receptors maintaining the complex into the cytoplasm when unliganded. Acts as a regulator of Akt/AKT1 activity by promoting the interaction between Akt/AKT1 and PHLPP1, thereby enhancing dephosphorylation and subsequent activation of Akt/AKT1. Interacts with IKBKE and IKBKB which facilitates IKK complex assembly leading to increased IKBKE and IKBKB kinase activity, NF-kappaB activation, and IFN production. The polypeptide is Peptidyl-prolyl cis-trans isomerase FKBP5 (FKBP5) (Saimiri boliviensis boliviensis (Bolivian squirrel monkey)).